Consider the following 143-residue polypeptide: Large ribosomal subunit protein uL11 (143 aa).

The protein belongs to the universal ribosomal protein uL11 family. As to quaternary structure, part of the ribosomal stalk of the 50S ribosomal subunit. Interacts with L10 and the large rRNA to form the base of the stalk. L10 forms an elongated spine to which L12 dimers bind in a sequential fashion forming a multimeric L10(L12)X complex. One or more lysine residues are methylated.

Its function is as follows. Forms part of the ribosomal stalk which helps the ribosome interact with GTP-bound translation factors. This chain is Large ribosomal subunit protein uL11, found in Laribacter hongkongensis (strain HLHK9).